Consider the following 289-residue polypeptide: Formamidopyrimidine-DNA glycosylase (289 aa).

P2 functions as the Schiff-base intermediate with DNA in the catalytic mechanism. The active-site Proton donor is the E3. K60 acts as the Proton donor; for beta-elimination activity in catalysis. DNA contacts are provided by H94, R126, and R167. An FPG-type zinc finger spans residues 252–287; it reads QVYGKPAGTPCPRCGTGLARIRIAGRSSVFCPRCQP. R277 functions as the Proton donor; for delta-elimination activity in the catalytic mechanism.

It belongs to the FPG family. Monomer. Zn(2+) serves as cofactor.

It carries out the reaction Hydrolysis of DNA containing ring-opened 7-methylguanine residues, releasing 2,6-diamino-4-hydroxy-5-(N-methyl)formamidopyrimidine.. The catalysed reaction is 2'-deoxyribonucleotide-(2'-deoxyribose 5'-phosphate)-2'-deoxyribonucleotide-DNA = a 3'-end 2'-deoxyribonucleotide-(2,3-dehydro-2,3-deoxyribose 5'-phosphate)-DNA + a 5'-end 5'-phospho-2'-deoxyribonucleoside-DNA + H(+). Functionally, involved in base excision repair of DNA damaged by oxidation or by mutagenic agents. Acts as a DNA glycosylase that recognizes and removes damaged bases. Has a preference for oxidized purines, such as 7,8-dihydro-8-oxoguanine (8-oxoG). Has AP (apurinic/apyrimidinic) lyase activity and introduces nicks in the DNA strand. Cleaves the DNA backbone by beta-delta elimination to generate a single-strand break at the site of the removed base with both 3'- and 5'-phosphates. In Thermomicrobium roseum (strain ATCC 27502 / DSM 5159 / P-2), this protein is Formamidopyrimidine-DNA glycosylase.